The primary structure comprises 101 residues: MINKKENIFKILTSSYSSEKSSILSEKNNTFTFKVLKNSKKSEIKSSIEKFFNVKVKKVRTVMLKGKSKKHKNIIGKRKNWKKAYVVLKKNQKINLIKNIE.

Belongs to the universal ribosomal protein uL23 family. In terms of assembly, part of the 50S ribosomal subunit. Contacts protein L29, and trigger factor when it is bound to the ribosome.

Its function is as follows. One of the early assembly proteins it binds 23S rRNA. One of the proteins that surrounds the polypeptide exit tunnel on the outside of the ribosome. Forms the main docking site for trigger factor binding to the ribosome. The sequence is that of Large ribosomal subunit protein uL23 from Wigglesworthia glossinidia brevipalpis.